The sequence spans 185 residues: Prenylated Rab acceptor protein 1 (185 aa).

The Cytoplasmic segment spans residues 1 to 78 (MAAEKDQQKD…RNVEYYQSNY (78 aa)). A required for interaction with prenylated RAB3A and VAMP2 region spans residues 30 to 54 (AGRERLERRRATIRPWSSFVDQRRF). The next 2 helical transmembrane spans lie at 79-94 (VFVFLGLILYCVVTSP) and 95-112 (MLLVALAVFFGACYILYL). Residues 113 to 131 (RTLQSKFVLFGREVSPAHQ) are Cytoplasmic-facing. 2 helical membrane-spanning segments follow: residues 132-148 (YALAGGVSFPFFWLAGA) and 149-165 (GSAVFWVLGATLVVIGS). The segment at 165 to 185 (SHAAFHQMEAVDGEELQMEPV) is required for interaction with GDI1. The Cytoplasmic segment spans residues 166-185 (HAAFHQMEAVDGEELQMEPV). Positions 175-185 (VDGEELQMEPV) are required for interaction with prenylated RAB3A and VAMP2. The tract at residues 175–185 (VDGEELQMEPV) is homodimerization.

This sequence belongs to the PRA1 family. Homodimer. Interacts with VAMP2 (synaptobrevin-2), prenylated Rab proteins, GDI1, NDRG1 and PCLO.

Its subcellular location is the cell membrane. It is found in the cytoplasm. The protein resides in the golgi apparatus. The protein localises to the cytoplasmic vesicle. It localises to the secretory vesicle. Its subcellular location is the synaptic vesicle. In terms of biological role, general Rab protein regulator required for vesicle formation from the Golgi complex. May control vesicle docking and fusion by mediating the action of Rab GTPases to the SNARE complexes. In addition it inhibits the removal of Rab GTPases from the membrane by GDI1. This is Prenylated Rab acceptor protein 1 (RABAC1) from Canis lupus familiaris (Dog).